A 313-amino-acid polypeptide reads, in one-letter code: Ribosomal RNA small subunit methyltransferase H (313 aa).

S-adenosyl-L-methionine contacts are provided by residues 34-36 (GGH), Asp-55, Phe-82, Asp-103, and Gln-110.

The protein belongs to the methyltransferase superfamily. RsmH family.

The protein resides in the cytoplasm. The enzyme catalyses cytidine(1402) in 16S rRNA + S-adenosyl-L-methionine = N(4)-methylcytidine(1402) in 16S rRNA + S-adenosyl-L-homocysteine + H(+). Its function is as follows. Specifically methylates the N4 position of cytidine in position 1402 (C1402) of 16S rRNA. This chain is Ribosomal RNA small subunit methyltransferase H, found in Pelobacter propionicus (strain DSM 2379 / NBRC 103807 / OttBd1).